The chain runs to 488 residues: 3-octaprenyl-4-hydroxybenzoate carboxy-lyase (488 aa).

Asn172 contributes to the Mn(2+) binding site. Prenylated FMN is bound by residues 175–177, 189–191, and 194–195; these read IYR, RWL, and RG. Glu238 is a binding site for Mn(2+). The active-site Proton donor is Asp287.

Belongs to the UbiD family. As to quaternary structure, homohexamer. It depends on prenylated FMN as a cofactor. Requires Mn(2+) as cofactor.

The protein localises to the cell membrane. The catalysed reaction is a 4-hydroxy-3-(all-trans-polyprenyl)benzoate + H(+) = a 2-(all-trans-polyprenyl)phenol + CO2. It functions in the pathway cofactor biosynthesis; ubiquinone biosynthesis. Its function is as follows. Catalyzes the decarboxylation of 3-octaprenyl-4-hydroxy benzoate to 2-octaprenylphenol, an intermediate step in ubiquinone biosynthesis. The chain is 3-octaprenyl-4-hydroxybenzoate carboxy-lyase from Alkalilimnicola ehrlichii (strain ATCC BAA-1101 / DSM 17681 / MLHE-1).